The sequence spans 216 residues: MNFDIARKRMVETQIISRGVKDRRLIEAMLKVPRHVFVEEAMAAQAYSDTPLPIGEKQTISQPYMVALMTELLELSGREKVLEIGTGSGYQAAILATLADRVYTVERIRPLALKARRALDRLGLLNVNIKISDGTIGWEEEAPFDAIIVTAGAPDVPDKLAEQLAVGGRLVIPVGNQFDQVLVRITKQEDGSLIRENVTGCRFVKLVGKYGWGTEE.

Ser61 is an active-site residue.

The protein belongs to the methyltransferase superfamily. L-isoaspartyl/D-aspartyl protein methyltransferase family.

It is found in the cytoplasm. It catalyses the reaction [protein]-L-isoaspartate + S-adenosyl-L-methionine = [protein]-L-isoaspartate alpha-methyl ester + S-adenosyl-L-homocysteine. In terms of biological role, catalyzes the methyl esterification of L-isoaspartyl residues in peptides and proteins that result from spontaneous decomposition of normal L-aspartyl and L-asparaginyl residues. It plays a role in the repair and/or degradation of damaged proteins. The chain is Protein-L-isoaspartate O-methyltransferase from Geobacter metallireducens (strain ATCC 53774 / DSM 7210 / GS-15).